The following is a 340-amino-acid chain: Heat-inducible transcription repressor HrcA (340 aa).

Belongs to the HrcA family.

Functionally, negative regulator of class I heat shock genes (grpE-dnaK-dnaJ and groELS operons). Prevents heat-shock induction of these operons. This Burkholderia vietnamiensis (strain G4 / LMG 22486) (Burkholderia cepacia (strain R1808)) protein is Heat-inducible transcription repressor HrcA.